Reading from the N-terminus, the 421-residue chain is 4-hydroxy-3-methylbut-2-en-1-yl diphosphate synthase (flavodoxin) (421 aa).

[4Fe-4S] cluster contacts are provided by Cys-311, Cys-314, Cys-357, and Glu-364.

It belongs to the IspG family. Requires [4Fe-4S] cluster as cofactor.

The catalysed reaction is (2E)-4-hydroxy-3-methylbut-2-enyl diphosphate + oxidized [flavodoxin] + H2O + 2 H(+) = 2-C-methyl-D-erythritol 2,4-cyclic diphosphate + reduced [flavodoxin]. Its pathway is isoprenoid biosynthesis; isopentenyl diphosphate biosynthesis via DXP pathway; isopentenyl diphosphate from 1-deoxy-D-xylulose 5-phosphate: step 5/6. Functionally, converts 2C-methyl-D-erythritol 2,4-cyclodiphosphate (ME-2,4cPP) into 1-hydroxy-2-methyl-2-(E)-butenyl 4-diphosphate. The chain is 4-hydroxy-3-methylbut-2-en-1-yl diphosphate synthase (flavodoxin) from Stenotrophomonas maltophilia (strain K279a).